We begin with the raw amino-acid sequence, 198 residues long: Protein XA-1 (198 aa).

The first 18 residues, Met1–Pro18, serve as a signal peptide directing secretion. Residues Leu17 to His198 are disordered. The span at Phe29–Val44 shows a compositional bias: pro residues. The segment covering His46–Arg59 has biased composition (basic and acidic residues). The segment covering Gly76–Lys86 has biased composition (basic residues). The span at His95 to Asp104 shows a compositional bias: basic and acidic residues. Residues His134–Lys145 show a composition bias toward basic residues. Residues Asn181–His198 are compositionally biased toward basic and acidic residues.

As to expression, expressed in the periphery of the cement gland as well as in the region of the hatching gland.

It localises to the secreted. This is Protein XA-1 from Xenopus laevis (African clawed frog).